A 348-amino-acid chain; its full sequence is Nicotinate-nucleotide--dimethylbenzimidazole phosphoribosyltransferase (348 aa).

Catalysis depends on Glu316, which acts as the Proton acceptor.

This sequence belongs to the CobT family.

It carries out the reaction 5,6-dimethylbenzimidazole + nicotinate beta-D-ribonucleotide = alpha-ribazole 5'-phosphate + nicotinate + H(+). The protein operates within nucleoside biosynthesis; alpha-ribazole biosynthesis; alpha-ribazole from 5,6-dimethylbenzimidazole: step 1/2. Catalyzes the synthesis of alpha-ribazole-5'-phosphate from nicotinate mononucleotide (NAMN) and 5,6-dimethylbenzimidazole (DMB). The polypeptide is Nicotinate-nucleotide--dimethylbenzimidazole phosphoribosyltransferase (Xanthomonas oryzae pv. oryzae (strain PXO99A)).